Here is a 296-residue protein sequence, read N- to C-terminus: 4-hydroxy-tetrahydrodipicolinate synthase (296 aa).

Residue T49 participates in pyruvate binding. Residue Y137 is the Proton donor/acceptor of the active site. The Schiff-base intermediate with substrate role is filled by K166. I208 is a pyruvate binding site.

Belongs to the DapA family. In terms of assembly, homotetramer; dimer of dimers.

It localises to the cytoplasm. It carries out the reaction L-aspartate 4-semialdehyde + pyruvate = (2S,4S)-4-hydroxy-2,3,4,5-tetrahydrodipicolinate + H2O + H(+). It participates in amino-acid biosynthesis; L-lysine biosynthesis via DAP pathway; (S)-tetrahydrodipicolinate from L-aspartate: step 3/4. Catalyzes the condensation of (S)-aspartate-beta-semialdehyde [(S)-ASA] and pyruvate to 4-hydroxy-tetrahydrodipicolinate (HTPA). This is 4-hydroxy-tetrahydrodipicolinate synthase from Azobacteroides pseudotrichonymphae genomovar. CFP2.